We begin with the raw amino-acid sequence, 317 residues long: tRNA pseudouridine synthase B (317 aa).

Aspartate 47 acts as the Nucleophile in catalysis.

It belongs to the pseudouridine synthase TruB family. Type 1 subfamily.

The catalysed reaction is uridine(55) in tRNA = pseudouridine(55) in tRNA. Functionally, responsible for synthesis of pseudouridine from uracil-55 in the psi GC loop of transfer RNAs. This chain is tRNA pseudouridine synthase B, found in Shewanella sp. (strain MR-4).